The chain runs to 421 residues: UDP-N-acetylglucosamine 1-carboxyvinyltransferase (421 aa).

22–23 (KN) is a binding site for phosphoenolpyruvate. Arg93 lines the UDP-N-acetyl-alpha-D-glucosamine pocket. The active-site Proton donor is the Cys117. A 2-(S-cysteinyl)pyruvic acid O-phosphothioketal modification is found at Cys117. UDP-N-acetyl-alpha-D-glucosamine contacts are provided by residues 122-126 (RPVDL), Asp308, and Ile330.

The protein belongs to the EPSP synthase family. MurA subfamily.

The protein localises to the cytoplasm. The catalysed reaction is phosphoenolpyruvate + UDP-N-acetyl-alpha-D-glucosamine = UDP-N-acetyl-3-O-(1-carboxyvinyl)-alpha-D-glucosamine + phosphate. Its pathway is cell wall biogenesis; peptidoglycan biosynthesis. Its function is as follows. Cell wall formation. Adds enolpyruvyl to UDP-N-acetylglucosamine. This chain is UDP-N-acetylglucosamine 1-carboxyvinyltransferase, found in Pseudomonas savastanoi pv. phaseolicola (strain 1448A / Race 6) (Pseudomonas syringae pv. phaseolicola (strain 1448A / Race 6)).